The primary structure comprises 267 residues: Hydroxyethylthiazole kinase (267 aa).

Residue Met46 participates in substrate binding. 2 residues coordinate ATP: Arg122 and Ser168. Position 195 (Gly195) interacts with substrate.

Belongs to the Thz kinase family. Mg(2+) serves as cofactor.

The enzyme catalyses 5-(2-hydroxyethyl)-4-methylthiazole + ATP = 4-methyl-5-(2-phosphooxyethyl)-thiazole + ADP + H(+). Its pathway is cofactor biosynthesis; thiamine diphosphate biosynthesis; 4-methyl-5-(2-phosphoethyl)-thiazole from 5-(2-hydroxyethyl)-4-methylthiazole: step 1/1. Functionally, catalyzes the phosphorylation of the hydroxyl group of 4-methyl-5-beta-hydroxyethylthiazole (THZ). The chain is Hydroxyethylthiazole kinase from Nitratidesulfovibrio vulgaris (strain DSM 19637 / Miyazaki F) (Desulfovibrio vulgaris).